The sequence spans 332 residues: N-arachidonyl glycine receptor (332 aa).

At 1–26 (MTTPHSQAQPGLPIDPHPDEYKVAAL) the chain is on the extracellular side. The helical transmembrane segment at 27 to 47 (VFYSCIFIIGLFVNVTALWVF) threads the bilayer. Residues 48–56 (SCTTKKRTT) lie on the Cytoplasmic side of the membrane. The chain crosses the membrane as a helical span at residues 57–77 (VTVYMMNVALLDLVFIMSLPF). Residues 78–95 (RMLYYAKGEWPFGEYFCR) are Extracellular-facing. Residues cysteine 94 and cysteine 173 are joined by a disulfide bond. The chain crosses the membrane as a helical span at residues 96-116 (ILGALTVFYPSIALWLLAFIS). The Cytoplasmic segment spans residues 117-138 (ADRYMAIVQPKYAKELKNTCKA). Residues 139 to 159 (VMACVGVWIMTLTTTIPLLLL) form a helical membrane-spanning segment. The Extracellular portion of the chain corresponds to 160-192 (YEDPDTASSTPPTCLKISDIIYLKAINALNFTR). N-linked (GlcNAc...) asparagine glycosylation is present at asparagine 189. Residues 193–213 (LIFFFLIPLFIMIGCYLVIIH) traverse the membrane as a helical segment. The Cytoplasmic segment spans residues 214–233 (SLLHGKTSKLKPKVKEKSIR). Residues 234 to 254 (IIITLMVQVLVCFMPFHICFA) form a helical membrane-spanning segment. At 255 to 269 (FLMLGGDENSYNPWG) the chain is on the extracellular side. Residues 270 to 290 (AFTTFLMNLSTCLDVILYYIV) traverse the membrane as a helical segment. At 291–332 (SKQFQARVISVMLYRNYLRSVRRKSFRSGSLRSLSNINSEML) the chain is on the cytoplasmic side. Serine 323 carries the phosphoserine modification.

Belongs to the G-protein coupled receptor 1 family.

Its subcellular location is the cell membrane. It is found in the cytoplasmic vesicle membrane. In terms of biological role, g protein-coupled receptor (GPCR) that plays a role in diverse physiological processes particularly within the immune and nervous systems. Becomes active when triggered by various endogenous ligands including endocannabinoid N-arachidonyl glycine (NAGly), delta-9-tetrahydrocannabinol or resolvin D2/RvD2 derived from the omega-3 fatty acid docosahexaenoic acid (DHA). Upon RvD2 binding, facilitates the resolution of inflammation, aiding in tissue repair and homeostasis. Mechanistically, RvD2 ligation initiates Galphas protein coupling, activation of cAMP-PKA signaling pathway and phosphorylation of STAT3, leading to RvD2-stimulated macrophage phagocytosis. Mediates NAGly-induced process of reorganization of actin filaments and induction of acrosomal exocytosis. Activation by N-arachidonoyl glycine (NAGly) can also induce apoptosis in macrophages. Plays a role in homeostasis of CD8+ subsets of intraepithelial lymphocytes (IELs) (CD8alphaalpha and CD8alphabeta IELs) in small intestine by supporting preferential migration of CD8alphaalpha T-cells to intraepithelial compartment over lamina propria compartment, and by mediating their reconstitution into small intestine after bone marrow transplant. Participates also in hypotensive responses, mediating reduction in intraocular and blood pressure. This chain is N-arachidonyl glycine receptor (GPR18), found in Bos taurus (Bovine).